A 186-amino-acid chain; its full sequence is Elongation factor P (186 aa).

The protein belongs to the elongation factor P family.

Its subcellular location is the cytoplasm. Its pathway is protein biosynthesis; polypeptide chain elongation. Functionally, involved in peptide bond synthesis. Stimulates efficient translation and peptide-bond synthesis on native or reconstituted 70S ribosomes in vitro. Probably functions indirectly by altering the affinity of the ribosome for aminoacyl-tRNA, thus increasing their reactivity as acceptors for peptidyl transferase. The sequence is that of Elongation factor P from Prochlorococcus marinus (strain MIT 9313).